An 867-amino-acid chain; its full sequence is Cilium assembly protein DZIP1 (867 aa).

The segment at 12-203 (MPFQKHVYYP…KANYYQCHFC (192 aa)) is mediates interaction with PCM1. Residues 12 to 367 (MPFQKHVYYP…QDFHNVMQLL (356 aa)) form a mediates interaction with GLI3 and localization to the cilium basal body region. Residues 154-278 (CDGEQSKKLL…SKEYEMQKTK (125 aa)) are required for interaction with DAZ1. The C2H2-type zinc-finger motif lies at 198 to 221 (YQCHFCDKAFMNQAFLQSHIQRRH). Position 226 is a phosphoserine; by PLK1 (Ser226). 3 coiled-coil regions span residues 230–340 (YQKN…KSNI), 401–445 (TSMI…FTCN), and 568–588 (DQLHRVLKSVESERHKQEREI). The segment at 446–617 (PLNSISEPKG…EKALLSSDQC (172 aa)) is mediates interaction with GDI2 and RAB8A. 3 stretches are compositionally biased toward polar residues: residues 643 to 654 (LIRQKAVSTDRT), 671 to 680 (KSSTITTPPF), and 708 to 718 (NKGSFGKNTVK). 2 disordered regions span residues 643–768 (LIRQ…GGTN) and 796–867 (SLEE…TSDV). The segment covering 722 to 733 (DGTEGSEIEDTD) has biased composition (acidic residues). Over residues 807–823 (SGKEQKEPPPAKNEPHF) the composition is skewed to basic and acidic residues. The span at 848–859 (SSTLKSSLVTVT) shows a compositional bias: low complexity.

The protein belongs to the DZIP C2H2-type zinc-finger protein family. As to quaternary structure, interacts with DAZ1. Interacts with the BBSome; recruits the BBSome to centriolar satellites of the cilium. Interacts with PCM1; localizes DZIP1 and the associated BBSome to centriolar satellites. Interacts with RAB8A (GDP-bound inactive form); recruits RAB8A to the basal body of the cilium and prevents its inhibition by GDI2. Interacts with GDI2; negatively regulates the interaction of GDI2 with GDP-bound RAB8A. Interacts with GLI3; retains GLI3 within the cytoplasm. Interacts with CEP164. Interacts with IFT88. Phosphorylation at Ser-226 by PLK1 before mitosis prevents interaction with PCM1 and localization to centriolar satellites. Thereby, it negatively regulates the localization of the BBSome to centriolar satellites. Predominantly expressed in testis (at protein level). Also expressed in fetal brain, adult oocytes and ovary. Expressed in undifferentiated ES cells. In testis, it is specifically expressed in germ cells (at protein level). Expressed in mature germ cells and secondary spermatocytes, while it is weakly or not expressed in primary spermatocytes.

The protein resides in the cytoplasm. It is found in the cytoskeleton. Its subcellular location is the cilium basal body. The protein localises to the microtubule organizing center. It localises to the centrosome. The protein resides in the centriolar satellite. It is found in the centriole. Its subcellular location is the nucleus. The protein localises to the nucleus speckle. In terms of biological role, molecular adapter that recruits protein complexes required for cilium assembly and function to the cilium basal body. At the exit of mitosis, localizes to the basal body and ciliary base of the forming primary cilium where it recruits and activates RAB8A to direct vesicle-mediated transport of proteins to the cilium. Also recruits the BBSome, a complex involved in cilium biogenesis, by bridging it to PCM1 at the centriolar satellites of the cilium. It is also required for the recruitment to the cilium basal body of the intraflagellar transport (IFT) machinery as well as the ciliary appendage proteins CEP164 and NINEIN. Functions as a regulator of Hedgehog signaling both through its role in cilium assembly but also probably through its ability to retain GLI3 within the cytoplasm. It is involved in spermatogenesis through its role in organization of the basal body and assembly of the sperm flagellum. Also indirectly involved in heart development through its function in ciliogenesis. This is Cilium assembly protein DZIP1 from Homo sapiens (Human).